Here is a 264-residue protein sequence, read N- to C-terminus: tRNA (guanine-N(1)-)-methyltransferase (264 aa).

Residues G125 and 145–150 (LGDFVL) each bind S-adenosyl-L-methionine.

Belongs to the RNA methyltransferase TrmD family. Homodimer.

Its subcellular location is the cytoplasm. It catalyses the reaction guanosine(37) in tRNA + S-adenosyl-L-methionine = N(1)-methylguanosine(37) in tRNA + S-adenosyl-L-homocysteine + H(+). In terms of biological role, specifically methylates guanosine-37 in various tRNAs. In Burkholderia lata (strain ATCC 17760 / DSM 23089 / LMG 22485 / NCIMB 9086 / R18194 / 383), this protein is tRNA (guanine-N(1)-)-methyltransferase.